We begin with the raw amino-acid sequence, 824 residues long: Ras guanine nucleotide exchange factor I (824 aa).

Disordered regions lie at residues 1–51 (MSNP…KPTK) and 65–167 (GSNL…LILD). The segment covering 8–41 (SNSTNGSSNSLNGESVSPNRLGSSPGSPISKASS) has biased composition (low complexity). Over residues 83-95 (NSSVGLLNNSTGS) the composition is skewed to polar residues. Residues 104-116 (SSPKSSYILSSSI) are compositionally biased toward low complexity. The segment covering 117 to 128 (GSGGSGGGGGSS) has biased composition (gly residues). Residues 136–167 (SASNNSSGPRSRSGSLGKNNSSQQNNNNLILD) are compositionally biased toward low complexity. The LisH domain occupies 223–255 (GRDNILQLILQHLQFEGLMDSRKILEEEAKIQY). 2 disordered regions span residues 330–354 (YVDE…TTAT) and 398–425 (NTQQ…STGT). Residues 331–341 (VDEKDNDKPSK) show a composition bias toward basic and acidic residues. Residues 343–354 (SPTTATTTTTAT) show a composition bias toward low complexity. Polar residues predominate over residues 413 to 425 (LKSTQSITGSTGT). The 126-residue stretch at 426 to 551 (LGPQVKAASL…VISDALNSGL (126 aa)) folds into the N-terminal Ras-GEF domain. The 232-residue stretch at 585-816 (DEEEISRQLT…YTRSMSFEPR (232 aa)) folds into the Ras-GEF domain.

In terms of biological role, promotes the exchange of Ras-bound GDP by GTP. In Dictyostelium discoideum (Social amoeba), this protein is Ras guanine nucleotide exchange factor I (gefI).